Reading from the N-terminus, the 362-residue chain is Heme A synthase (362 aa).

The next 5 membrane-spanning stretches (helical) occupy residues 11-31, 102-122, 128-148, 159-179, and 198-218; these read AAIR…VLVG, VIGM…AVSG, LWLI…MVAS, VRLA…VWTL, and AWAL…VAGL. Residue His-262 participates in heme binding. The next 3 helical transmembrane spans lie at 264–286, 297–317, and 318–338; these read MTAY…AGAG, LAAI…VVPI, and SLAL…VLQA. His-323 contacts heme.

The protein belongs to the COX15/CtaA family. Type 2 subfamily. In terms of assembly, interacts with CtaB. Heme b is required as a cofactor.

The protein resides in the cell membrane. The catalysed reaction is Fe(II)-heme o + 2 A + H2O = Fe(II)-heme a + 2 AH2. Its pathway is porphyrin-containing compound metabolism; heme A biosynthesis; heme A from heme O: step 1/1. In terms of biological role, catalyzes the conversion of heme O to heme A by two successive hydroxylations of the methyl group at C8. The first hydroxylation forms heme I, the second hydroxylation results in an unstable dihydroxymethyl group, which spontaneously dehydrates, resulting in the formyl group of heme A. The sequence is that of Heme A synthase from Bradyrhizobium sp. (strain ORS 278).